The chain runs to 349 residues: Heat-inducible transcription repressor HrcA (349 aa).

Belongs to the HrcA family.

Its function is as follows. Negative regulator of class I heat shock genes (grpE-dnaK-dnaJ and groELS operons). Prevents heat-shock induction of these operons. This Mycoplasmoides gallisepticum (strain R(low / passage 15 / clone 2)) (Mycoplasma gallisepticum) protein is Heat-inducible transcription repressor HrcA.